A 224-amino-acid polypeptide reads, in one-letter code: EEF1A lysine methyltransferase 3 (224 aa).

Residues Trp-58, 84–86, Asp-105, Trp-134, and Ala-151 each bind S-adenosyl-L-methionine; that span reads GAG.

Belongs to the methyltransferase superfamily. METTL21 family.

It localises to the cytoplasm. The protein resides in the cytoskeleton. Its subcellular location is the microtubule organizing center. It is found in the centrosome. The catalysed reaction is L-lysyl-[protein] + 3 S-adenosyl-L-methionine = N(6),N(6),N(6)-trimethyl-L-lysyl-[protein] + 3 S-adenosyl-L-homocysteine + 3 H(+). It catalyses the reaction L-lysyl-[protein] + S-adenosyl-L-methionine = N(6)-methyl-L-lysyl-[protein] + S-adenosyl-L-homocysteine + H(+). It carries out the reaction N(6)-methyl-L-lysyl-[protein] + S-adenosyl-L-methionine = N(6),N(6)-dimethyl-L-lysyl-[protein] + S-adenosyl-L-homocysteine + H(+). The enzyme catalyses N(6),N(6)-dimethyl-L-lysyl-[protein] + S-adenosyl-L-methionine = N(6),N(6),N(6)-trimethyl-L-lysyl-[protein] + S-adenosyl-L-homocysteine + H(+). Protein-lysine methyltransferase that selectively mono-, di- and trimethylates 'Lys-165' of the translation elongation factors EEF1A1 and EEF1A2 in an aminoacyl-tRNA and GTP-dependent manner. EEF1A1 methylation by EEF1AKMT3 is dynamic as well as inducible by stress conditions, such as ER-stress, and plays a regulatory role on mRNA translation. The polypeptide is EEF1A lysine methyltransferase 3 (Xenopus tropicalis (Western clawed frog)).